The chain runs to 213 residues: Retinitis pigmentosa 9 protein homolog (213 aa).

Residues 1–61 (MSSGAGSRRP…IKEDETKPED (61 aa)) are disordered. The interval 1–147 (MSSGAGSRRP…RENKRHEKDV (147 aa)) is PIM1-binding. Composition is skewed to basic and acidic residues over residues 9–21 (RPRE…LQRR) and 52–61 (IKEDETKPED). The CCHC-type zinc-finger motif lies at 96–114 (QCWRCKRYGHRTGDKECPF). Lys121 participates in a covalent cross-link: Glycyl lysine isopeptide (Lys-Gly) (interchain with G-Cter in SUMO2). Residues 154–213 (QLLEDSTSDDDGSSSSSSGDREKRKKRKKKEKHKKRKKEKKKKKKRKHKASKSSESSDSE) form a disordered region. Basic residues predominate over residues 176–204 (KRKKRKKKEKHKKRKKEKKKKKKRKHKAS). Phosphoserine; by PIM1; in vitro is present on residues Ser204 and Ser206.

In terms of assembly, binds to PIM1. Binds to ZNHIT4. Highly expressed in the testis, moderately in the kidney, liver and spleen, and weakly in the skeletal muscle and heart.

It localises to the nucleus. Its function is as follows. Is thought to be a target protein for the PIM1 kinase. May play some roles in B-cell proliferation in association with PIM1. The polypeptide is Retinitis pigmentosa 9 protein homolog (rp9) (Mus musculus (Mouse)).